Here is a 146-residue protein sequence, read N- to C-terminus: Cyanate hydratase (146 aa).

Catalysis depends on residues Arg87, Glu90, and Ser113.

It belongs to the cyanase family.

It catalyses the reaction cyanate + hydrogencarbonate + 3 H(+) = NH4(+) + 2 CO2. In terms of biological role, catalyzes the reaction of cyanate with bicarbonate to produce ammonia and carbon dioxide. The sequence is that of Cyanate hydratase from Pseudomonas putida (strain ATCC 700007 / DSM 6899 / JCM 31910 / BCRC 17059 / LMG 24140 / F1).